The sequence spans 119 residues: Ribonuclease P protein component (119 aa).

Belongs to the RnpA family. In terms of assembly, consists of a catalytic RNA component (M1 or rnpB) and a protein subunit.

It catalyses the reaction Endonucleolytic cleavage of RNA, removing 5'-extranucleotides from tRNA precursor.. In terms of biological role, RNaseP catalyzes the removal of the 5'-leader sequence from pre-tRNA to produce the mature 5'-terminus. It can also cleave other RNA substrates such as 4.5S RNA. The protein component plays an auxiliary but essential role in vivo by binding to the 5'-leader sequence and broadening the substrate specificity of the ribozyme. This chain is Ribonuclease P protein component, found in Salmonella arizonae (strain ATCC BAA-731 / CDC346-86 / RSK2980).